Here is a 123-residue protein sequence, read N- to C-terminus: Omega-oxotoxin-Ot1a (123 aa).

The signal sequence occupies residues 1-16; the sequence is MKIVLVFVCTLYLAQA. A propeptide spanning residues 17–54 is cleaved from the precursor; that stretch reads TYLSEQDVNEVSEFLEALDQANEAASEMVEAAETEEAR. Positions 55 to 122 constitute an Oxytoxin-type inhibitor cystine knot (ICK) domain; that stretch reads DWECLPLHSS…GKINTCDKYK (68 aa). Intrachain disulfides connect C58/C72, C65/C77, C69/C118, C71/C106, and C79/C104.

It belongs to the spiderine family. Spiderine subfamily. In terms of processing, mass spectrometry data suggest a carboxylated free C-terminal residue. As to expression, expressed by the venom gland.

The protein localises to the secreted. Weak blocker of vertebrate P/Q-, N- and L-type voltage-gated calcium channels (Cav1 and Cav2). Is both paralytic and lethal when injected into lepidopteran larvae. Is not toxic to mice. In Oxyopes takobius (Lynx spider), this protein is Omega-oxotoxin-Ot1a.